The primary structure comprises 525 residues: Probable protein kinase UbiB (525 aa).

In terms of domain architecture, Protein kinase spans 118–500 (DFERVPVASA…QKRTNRLLQG (383 aa)). ATP-binding positions include 124-132 (VASASIAQV) and K150. D285 (proton acceptor) is an active-site residue. A helical membrane pass occupies residues 501 to 521 (LLLFGVAVGVGAALARVFLAL).

It belongs to the ABC1 family. UbiB subfamily.

Its subcellular location is the cell inner membrane. It functions in the pathway cofactor biosynthesis; ubiquinone biosynthesis [regulation]. Its function is as follows. Is probably a protein kinase regulator of UbiI activity which is involved in aerobic coenzyme Q (ubiquinone) biosynthesis. The sequence is that of Probable protein kinase UbiB from Paraburkholderia xenovorans (strain LB400).